We begin with the raw amino-acid sequence, 343 residues long: Protein RecA (343 aa).

66-73 (GPESSGKT) lines the ATP pocket.

This sequence belongs to the RecA family.

The protein resides in the cytoplasm. Its function is as follows. Can catalyze the hydrolysis of ATP in the presence of single-stranded DNA, the ATP-dependent uptake of single-stranded DNA by duplex DNA, and the ATP-dependent hybridization of homologous single-stranded DNAs. It interacts with LexA causing its activation and leading to its autocatalytic cleavage. In Rickettsia bellii (strain RML369-C), this protein is Protein RecA.